The sequence spans 362 residues: NAD(P)H-quinone oxidoreductase subunit 1, chloroplastic (362 aa).

A run of 8 helical transmembrane segments spans residues 29–49 (ILPI…IVWL), 103–123 (IAVI…HFVL), 128–148 (IGVF…LMAG), 164–184 (AAQS…ISLL), 202–222 (FFGW…ISSL), 247–267 (YSGI…LVSS), 303–323 (TMGI…SITI), and 342–362 (FLLP…LVSL).

Belongs to the complex I subunit 1 family. As to quaternary structure, NDH is composed of at least 16 different subunits, 5 of which are encoded in the nucleus.

It localises to the plastid. The protein localises to the chloroplast thylakoid membrane. The enzyme catalyses a plastoquinone + NADH + (n+1) H(+)(in) = a plastoquinol + NAD(+) + n H(+)(out). The catalysed reaction is a plastoquinone + NADPH + (n+1) H(+)(in) = a plastoquinol + NADP(+) + n H(+)(out). In terms of biological role, NDH shuttles electrons from NAD(P)H:plastoquinone, via FMN and iron-sulfur (Fe-S) centers, to quinones in the photosynthetic chain and possibly in a chloroplast respiratory chain. The immediate electron acceptor for the enzyme in this species is believed to be plastoquinone. Couples the redox reaction to proton translocation, and thus conserves the redox energy in a proton gradient. This chain is NAD(P)H-quinone oxidoreductase subunit 1, chloroplastic, found in Hordeum vulgare (Barley).